We begin with the raw amino-acid sequence, 152 residues long: Cell division protein SepF (152 aa).

A compositionally biased stretch (basic and acidic residues) spans 23-32 (EVAREPEPMQ). Residues 23–42 (EVAREPEPMQKKTKKEKPSK) are disordered.

This sequence belongs to the SepF family. As to quaternary structure, homodimer. Interacts with FtsZ.

The protein resides in the cytoplasm. Functionally, cell division protein that is part of the divisome complex and is recruited early to the Z-ring. Probably stimulates Z-ring formation, perhaps through the cross-linking of FtsZ protofilaments. Its function overlaps with FtsA. The chain is Cell division protein SepF from Listeria welshimeri serovar 6b (strain ATCC 35897 / DSM 20650 / CCUG 15529 / CIP 8149 / NCTC 11857 / SLCC 5334 / V8).